Here is an 837-residue protein sequence, read N- to C-terminus: Outer membrane usher protein PsaC (837 aa).

An N-terminal signal peptide occupies residues 1–23 (MKKLIVQFTTITLLMSTSFLVGA).

This sequence belongs to the fimbrial export usher family.

It localises to the cell outer membrane. In terms of biological role, involved in the export and assembly of PsaA (pH 6) fimbrial subunits across the outer membrane. In Yersinia pestis, this protein is Outer membrane usher protein PsaC (psaC).